A 214-amino-acid polypeptide reads, in one-letter code: LexA repressor (214 aa).

The segment at residues 26 to 46 (VREIGEAVGLSSSSTVHSYLK) is a DNA-binding region (H-T-H motif). Residues Ser138 and Lys175 each act as for autocatalytic cleavage activity in the active site.

The protein belongs to the peptidase S24 family. Homodimer.

It catalyses the reaction Hydrolysis of Ala-|-Gly bond in repressor LexA.. In terms of biological role, represses a number of genes involved in the response to DNA damage (SOS response), including recA and lexA. In the presence of single-stranded DNA, RecA interacts with LexA causing an autocatalytic cleavage which disrupts the DNA-binding part of LexA, leading to derepression of the SOS regulon and eventually DNA repair. The sequence is that of LexA repressor from Desulforamulus reducens (strain ATCC BAA-1160 / DSM 100696 / MI-1) (Desulfotomaculum reducens).